A 503-amino-acid polypeptide reads, in one-letter code: Glycerol kinase (503 aa).

T14 contributes to the ADP binding site. ATP contacts are provided by T14, T15, and S16. Position 14 (T14) interacts with sn-glycerol 3-phosphate. R18 contributes to the ADP binding site. Sn-glycerol 3-phosphate contacts are provided by R84, E85, Y136, and D246. Residues R84, E85, Y136, D246, and Q247 each contribute to the glycerol site. 2 residues coordinate ADP: T268 and G311. The ATP site is built by T268, G311, Q315, and G412. 2 residues coordinate ADP: G412 and N416.

It belongs to the FGGY kinase family.

The enzyme catalyses glycerol + ATP = sn-glycerol 3-phosphate + ADP + H(+). It functions in the pathway polyol metabolism; glycerol degradation via glycerol kinase pathway; sn-glycerol 3-phosphate from glycerol: step 1/1. Its activity is regulated as follows. Inhibited by fructose 1,6-bisphosphate (FBP). Functionally, key enzyme in the regulation of glycerol uptake and metabolism. Catalyzes the phosphorylation of glycerol to yield sn-glycerol 3-phosphate. The protein is Glycerol kinase of Haemophilus influenzae (strain PittGG).